Reading from the N-terminus, the 194-residue chain is Glycerol-3-phosphate acyltransferase (194 aa).

The next 5 helical transmembrane spans lie at 3-23 (IALL…LIVG), 47-67 (VLGK…GVLP), 78-97 (IHGI…PIYL), 112-132 (ILGV…TLLF), and 153-173 (LFFD…LIII).

The protein belongs to the PlsY family. Probably interacts with PlsX.

The protein localises to the cell membrane. It catalyses the reaction an acyl phosphate + sn-glycerol 3-phosphate = a 1-acyl-sn-glycero-3-phosphate + phosphate. The protein operates within lipid metabolism; phospholipid metabolism. In terms of biological role, catalyzes the transfer of an acyl group from acyl-phosphate (acyl-PO(4)) to glycerol-3-phosphate (G3P) to form lysophosphatidic acid (LPA). This enzyme utilizes acyl-phosphate as fatty acyl donor, but not acyl-CoA or acyl-ACP. This Macrococcus caseolyticus (strain JCSC5402) (Macrococcoides caseolyticum) protein is Glycerol-3-phosphate acyltransferase.